The following is a 149-amino-acid chain: 6,7-dimethyl-8-ribityllumazine synthase (149 aa).

5-amino-6-(D-ribitylamino)uracil is bound by residues Phe-22, 56–58 (ALE), and 80–82 (AVI). 85-86 (ET) lines the (2S)-2-hydroxy-3-oxobutyl phosphate pocket. Residue His-88 is the Proton donor of the active site. Residue Asn-113 coordinates 5-amino-6-(D-ribitylamino)uracil. (2S)-2-hydroxy-3-oxobutyl phosphate is bound at residue Arg-127.

It belongs to the DMRL synthase family.

It catalyses the reaction (2S)-2-hydroxy-3-oxobutyl phosphate + 5-amino-6-(D-ribitylamino)uracil = 6,7-dimethyl-8-(1-D-ribityl)lumazine + phosphate + 2 H2O + H(+). It participates in cofactor biosynthesis; riboflavin biosynthesis; riboflavin from 2-hydroxy-3-oxobutyl phosphate and 5-amino-6-(D-ribitylamino)uracil: step 1/2. Catalyzes the formation of 6,7-dimethyl-8-ribityllumazine by condensation of 5-amino-6-(D-ribitylamino)uracil with 3,4-dihydroxy-2-butanone 4-phosphate. This is the penultimate step in the biosynthesis of riboflavin. The chain is 6,7-dimethyl-8-ribityllumazine synthase from Methylobacillus flagellatus (strain ATCC 51484 / DSM 6875 / VKM B-1610 / KT).